Consider the following 575-residue polypeptide: Urease subunit alpha (575 aa).

Residues 138–575 (GAVDCHVHLI…LPMAQRYFLF (438 aa)) form the Urease domain. Ni(2+) is bound by residues His143, His145, and Lys226. At Lys226 the chain carries N6-carboxylysine. His228 lines the substrate pocket. Positions 255 and 281 each coordinate Ni(2+). The active-site Proton donor is the His329. Asp369 is a Ni(2+) binding site.

Belongs to the metallo-dependent hydrolases superfamily. Urease alpha subunit family. In terms of assembly, heterotrimer of UreA (gamma), UreB (beta) and UreC (alpha) subunits. Three heterotrimers associate to form the active enzyme. Ni cation is required as a cofactor. In terms of processing, carboxylation allows a single lysine to coordinate two nickel ions.

The protein localises to the cytoplasm. The catalysed reaction is urea + 2 H2O + H(+) = hydrogencarbonate + 2 NH4(+). Its pathway is nitrogen metabolism; urea degradation; CO(2) and NH(3) from urea (urease route): step 1/1. This chain is Urease subunit alpha, found in Frankia alni (strain DSM 45986 / CECT 9034 / ACN14a).